We begin with the raw amino-acid sequence, 499 residues long: Ribose import ATP-binding protein RbsA (499 aa).

2 consecutive ABC transporter domains span residues 3–240 and 250–494; these read VEMT…VGRA and LTPG…TGGD. 35–42 contacts ATP; that stretch reads GENGAGKS.

It belongs to the ABC transporter superfamily. Ribose importer (TC 3.A.1.2.1) family. In terms of assembly, the complex is composed of an ATP-binding protein (RbsA), two transmembrane proteins (RbsC) and a solute-binding protein (RbsB).

Its subcellular location is the cell membrane. The enzyme catalyses D-ribose(out) + ATP + H2O = D-ribose(in) + ADP + phosphate + H(+). Part of the ABC transporter complex RbsABC involved in ribose import. Responsible for energy coupling to the transport system. The protein is Ribose import ATP-binding protein RbsA of Halalkalibacterium halodurans (strain ATCC BAA-125 / DSM 18197 / FERM 7344 / JCM 9153 / C-125) (Bacillus halodurans).